The chain runs to 275 residues: NH(3)-dependent NAD(+) synthetase (275 aa).

Position 47 to 54 (47 to 54 (GISGGQDS)) interacts with ATP. Asp53 is a binding site for Mg(2+). Arg141 is a deamido-NAD(+) binding site. Thr161 contacts ATP. Position 166 (Glu166) interacts with Mg(2+). The deamido-NAD(+) site is built by Lys174 and Asp181. The ATP site is built by Lys190 and Thr212. Residue 261 to 262 (HK) coordinates deamido-NAD(+).

The protein belongs to the NAD synthetase family. As to quaternary structure, homodimer.

The catalysed reaction is deamido-NAD(+) + NH4(+) + ATP = AMP + diphosphate + NAD(+) + H(+). Its pathway is cofactor biosynthesis; NAD(+) biosynthesis; NAD(+) from deamido-NAD(+) (ammonia route): step 1/1. Catalyzes the ATP-dependent amidation of deamido-NAD to form NAD. Uses ammonia as a nitrogen source. In Lactiplantibacillus plantarum (strain ATCC BAA-793 / NCIMB 8826 / WCFS1) (Lactobacillus plantarum), this protein is NH(3)-dependent NAD(+) synthetase.